The chain runs to 131 residues: Histone H2A.2 (131 aa).

The tract at residues 1–22 (MSGGKGKAGSSEKASTSRSAKA) is disordered. S2 carries the post-translational modification N-acetylserine. An N6-acetyllysine mark is found at K5 and K7. Q105 carries the N5-methylglutamine modification. K126 participates in a covalent cross-link: Glycyl lysine isopeptide (Lys-Gly) (interchain with G-Cter in SUMO). S128 is subject to Phosphoserine. The short motif at 128-129 (SQ) is the [ST]-Q motif element.

This sequence belongs to the histone H2A family. As to quaternary structure, the nucleosome is a histone octamer containing two molecules each of H2A, H2B, H3 and H4 assembled in one H3-H4 heterotetramer and two H2A-H2B heterodimers. The octamer wraps approximately 147 bp of DNA. In terms of processing, phosphorylated to form H2AS128ph (gamma-H2A) in response to DNA double-strand breaks (DSBs) generated by exogenous genotoxic agents and by stalled replication forks. Phosphorylation is dependent on the DNA damage checkpoint kinases MEC1/ATR and TEL1/ATM, spreads on either side of a detected DSB site and may mark the surrounding chromatin for recruitment of proteins required for DNA damage signaling and repair. Gamma-H2A is removed from the DNA prior to the strand invasion-primer extension step of the repair process and subsequently dephosphorylated. Dephosphorylation is necessary for efficient recovery from the DNA damage checkpoint. Post-translationally, acetylated by ESA1 to form H2AK4ac and H2AK7ac.

The protein localises to the nucleus. The protein resides in the chromosome. In terms of biological role, core component of nucleosome which plays a central role in DNA double strand break (DSB) repair. Nucleosomes wrap and compact DNA into chromatin, limiting DNA accessibility to the cellular machineries which require DNA as a template. Histones thereby play a central role in transcription regulation, DNA repair, DNA replication and chromosomal stability. DNA accessibility is regulated via a complex set of post-translational modifications of histones, also called histone code, and nucleosome remodeling. In Scheffersomyces stipitis (strain ATCC 58785 / CBS 6054 / NBRC 10063 / NRRL Y-11545) (Yeast), this protein is Histone H2A.2 (HTA2).